The primary structure comprises 324 residues: Biotin synthase (324 aa).

A Radical SAM core domain is found at 42–269; it reads NEVQISSLLN…KSYIRLAAGR (228 aa). [4Fe-4S] cluster-binding residues include Cys57, Cys61, and Cys64. 4 residues coordinate [2Fe-2S] cluster: Cys101, Cys132, Cys192, and Arg264.

The protein belongs to the radical SAM superfamily. Biotin synthase family. In terms of assembly, homodimer. Requires [4Fe-4S] cluster as cofactor. [2Fe-2S] cluster is required as a cofactor.

It carries out the reaction (4R,5S)-dethiobiotin + (sulfur carrier)-SH + 2 reduced [2Fe-2S]-[ferredoxin] + 2 S-adenosyl-L-methionine = (sulfur carrier)-H + biotin + 2 5'-deoxyadenosine + 2 L-methionine + 2 oxidized [2Fe-2S]-[ferredoxin]. The protein operates within cofactor biosynthesis; biotin biosynthesis; biotin from 7,8-diaminononanoate: step 2/2. Catalyzes the conversion of dethiobiotin (DTB) to biotin by the insertion of a sulfur atom into dethiobiotin via a radical-based mechanism. In Ehrlichia canis (strain Jake), this protein is Biotin synthase.